A 384-amino-acid chain; its full sequence is GTPase Obg (384 aa).

The 159-residue stretch at Met1–Leu159 folds into the Obg domain. A disordered region spans residues Ala20–Trp46. The span at Gly33 to Gly43 shows a compositional bias: gly residues. Residues Ala160–Thr348 form the OBG-type G domain. GTP-binding positions include Gly166–Ser173, Phe191–His195, Asp213–Gly216, Asn284–Asp287, and Ser329–Leu331. Residues Ser173 and Thr193 each contribute to the Mg(2+) site.

It belongs to the TRAFAC class OBG-HflX-like GTPase superfamily. OBG GTPase family. In terms of assembly, monomer. The cofactor is Mg(2+).

The protein localises to the cytoplasm. An essential GTPase which binds GTP, GDP and possibly (p)ppGpp with moderate affinity, with high nucleotide exchange rates and a fairly low GTP hydrolysis rate. Plays a role in control of the cell cycle, stress response, ribosome biogenesis and in those bacteria that undergo differentiation, in morphogenesis control. The chain is GTPase Obg from Neisseria meningitidis serogroup C / serotype 2a (strain ATCC 700532 / DSM 15464 / FAM18).